The chain runs to 236 residues: Ribonuclease PH (236 aa).

Phosphate is bound by residues Arg-86 and 124–126 (GTR).

The protein belongs to the RNase PH family. Homohexameric ring arranged as a trimer of dimers.

The catalysed reaction is tRNA(n+1) + phosphate = tRNA(n) + a ribonucleoside 5'-diphosphate. Its function is as follows. Phosphorolytic 3'-5' exoribonuclease that plays an important role in tRNA 3'-end maturation. Removes nucleotide residues following the 3'-CCA terminus of tRNAs; can also add nucleotides to the ends of RNA molecules by using nucleoside diphosphates as substrates, but this may not be physiologically important. Probably plays a role in initiation of 16S rRNA degradation (leading to ribosome degradation) during starvation. The polypeptide is Ribonuclease PH (Thermodesulfovibrio yellowstonii (strain ATCC 51303 / DSM 11347 / YP87)).